Reading from the N-terminus, the 80-residue chain is Translation initiation factor IF-1 (80 aa).

The S1-like domain occupies 6–80; the sequence is EKKKKDESDS…TSRGRIVYRR (75 aa).

The protein belongs to the IF-1 family. Component of the 30S ribosomal translation pre-initiation complex which assembles on the 30S ribosome in the order IF-2 and IF-3, IF-1 and N-formylmethionyl-tRNA(fMet); mRNA recruitment can occur at any time during PIC assembly.

The protein resides in the cytoplasm. One of the essential components for the initiation of protein synthesis. Stabilizes the binding of IF-2 and IF-3 on the 30S subunit to which N-formylmethionyl-tRNA(fMet) subsequently binds. Helps modulate mRNA selection, yielding the 30S pre-initiation complex (PIC). Upon addition of the 50S ribosomal subunit IF-1, IF-2 and IF-3 are released leaving the mature 70S translation initiation complex. The chain is Translation initiation factor IF-1 from Deinococcus radiodurans (strain ATCC 13939 / DSM 20539 / JCM 16871 / CCUG 27074 / LMG 4051 / NBRC 15346 / NCIMB 9279 / VKM B-1422 / R1).